Reading from the N-terminus, the 350-residue chain is Probable transposase-like protein At4g04430 (350 aa).

Disordered regions lie at residues 1-57 (MPSD…PSVN) and 307-328 (QIGQANPNEPPVSAAPEPQVAN). Residues 30 to 43 (SGVQGSGSRSGSTV) are compositionally biased toward low complexity.

It belongs to the transposase 24 family.

The polypeptide is Probable transposase-like protein At4g04430 (Arabidopsis thaliana (Mouse-ear cress)).